The following is a 409-amino-acid chain: Putative competence-damage inducible protein (409 aa).

It belongs to the CinA family.

This Clostridium botulinum (strain Langeland / NCTC 10281 / Type F) protein is Putative competence-damage inducible protein.